We begin with the raw amino-acid sequence, 415 residues long: Mitochondrial tRNA-specific 2-thiouridylase 1 (415 aa).

ATP contacts are provided by residues 37 to 44 and Met-63; that span reads AMSGGVDS. The tract at residues 124-126 is interaction with target base in tRNA; the sequence is NPD. Cys-129 acts as the Nucleophile in catalysis. Cys-129 and Cys-234 form a disulfide bridge. Residue Gly-159 participates in ATP binding. Residues 183 to 185 are interaction with tRNA; it reads KDQ. Cys-234 functions as the Cysteine persulfide intermediate in the catalytic mechanism. The interaction with tRNA stretch occupies residues 356-357; that stretch reads RH.

This sequence belongs to the MnmA/TRMU family.

Its subcellular location is the mitochondrion. It carries out the reaction 5-taurinomethyluridine(34) in tRNA + S-sulfanyl-L-cysteinyl-[protein] + AH2 + ATP = 5-taurinomethyl-2-thiouridine(34) in tRNA + L-cysteinyl-[protein] + A + AMP + diphosphate + H(+). Its function is as follows. Catalyzes the 2-thiolation of uridine at the wobble position (U34) of mitochondrial tRNA(Lys), tRNA(Glu) and tRNA(Gln). Required for the formation of 5-taurinomethyl-2-thiouridine (tm5s2U) of mitochondrial tRNA(Lys), tRNA(Glu), and tRNA(Gln) at the wobble position. ATP is required to activate the C2 atom of the wobble base. This Schizosaccharomyces pombe (strain 972 / ATCC 24843) (Fission yeast) protein is Mitochondrial tRNA-specific 2-thiouridylase 1.